Here is a 304-residue protein sequence, read N- to C-terminus: UDP-3-O-acyl-N-acetylglucosamine deacetylase (304 aa).

Zn(2+) contacts are provided by histidine 78, histidine 237, and aspartate 241. Histidine 264 (proton donor) is an active-site residue.

The protein belongs to the LpxC family. Requires Zn(2+) as cofactor.

It catalyses the reaction a UDP-3-O-[(3R)-3-hydroxyacyl]-N-acetyl-alpha-D-glucosamine + H2O = a UDP-3-O-[(3R)-3-hydroxyacyl]-alpha-D-glucosamine + acetate. The protein operates within glycolipid biosynthesis; lipid IV(A) biosynthesis; lipid IV(A) from (3R)-3-hydroxytetradecanoyl-[acyl-carrier-protein] and UDP-N-acetyl-alpha-D-glucosamine: step 2/6. Functionally, catalyzes the hydrolysis of UDP-3-O-myristoyl-N-acetylglucosamine to form UDP-3-O-myristoylglucosamine and acetate, the committed step in lipid A biosynthesis. This chain is UDP-3-O-acyl-N-acetylglucosamine deacetylase, found in Thioalkalivibrio sulfidiphilus (strain HL-EbGR7).